The sequence spans 1118 residues: MALQLENGRPHHHQVPIMVKKKRTGSGSTGESSGEAPGAPGHGSSQRAERGPQQHGGGRGWVPQHGGRGGGQYQGRGGHYQGRGGQGSHHPGGGPPEYQGRGGPGSHHPGGGPPDYQGRGGSGSHHPGGGPPEYQPRDYQGRGGPRPRGGMPQPYYGGPRGSGGRSVPSGSSRTVPELHQAPHVQYQAPMVSPTPSGAGSSSQPAAEVSSGQVQQQFQQLATRDQSSTSQAIQIAPPSSKSVRFPLRPGKGTYGDRCIVKANHFFAELPDKDLHQYDVSITPEVTSRGVNRAVMFELVTLYRYSHLGGRLPAYDGRKSLYTAGPLPFASRTFEITLQDEEDSLGGGQGTQRRERLFRVVIKFAARADLHHLAMFLAGRQADAPQEALQVLDIVLRELPTTRYSPVGRSFYSPNLGRRQQLGEGLESWRGFYQSIRPTQMGLSLNIDMSSTAFIEPLPVIDFVAQLLNRDISVRPLSDSDRVKIKKALRGVKVEVTHRGNMRRKYRISGLTSQATRELSFPVDDRGTVKTVVQYFLETYGFSIQHTTLPCLQVGNQQRPNYLPMEVCKIVEGQRYSKRLNEKQITALLKVTCQRPQERELDILRTVSHNAYHEDQYAQEFGIKIDERLASVEARVLPPPRLKYHDSGREKDVLPRVGQWNMMNKKMVNGGRVNNWACINFSRNVQDSAARGFCHELAIMCQISGMDFALEPVLPPLTARPEHVERALKARYQDAMNMLRPQGRELDLLIVILPDNNGSLYGDLKRICETDLGLVSQCCLTKHVFKMSKQYLANVALKINVKVGGRNTVLVDALTRRIPLVSDRPTIIFGADVTHPHPGEDSSPSIAAVVASQDWPEVTKYAGLVSAQAHRQELIQDLFKVWQDPHRGTVTGGMIKELLISFKRATGQKPQRIIFYRDGVSEGQFYQVLLYELDAIRKACASLEPNYQPPVTFVVVQKRHHTRLFANNHNDQRTVDRSGNILPGTVVDSKICHPTEFDFYLCSHAGIQGTSRPAHYHVLWDENKFTADELQTLTNNLCYTYARCTRSVSIVPPAYYAHLAAFRARFYMEPETSDSGSMASGAATSRGLPPGVRSARVAGNVAVRPLPALKENVKRVMFYC.

Disordered stretches follow at residues 1–175 (MALQ…SRTV) and 188–246 (APMV…RFPL). Basic residues predominate over residues 10-24 (PHHHQVPIMVKKKRT). Residues 25–35 (GSGSTGESSGE) show a composition bias toward low complexity. Gly residues-rich tracts occupy residues 54-92 (QHGG…HHPG), 100-110 (GRGGPGSHHPG), and 118-128 (GRGGSGSHHPG). 2 stretches are compositionally biased toward low complexity: residues 148 to 157 (RGGMPQPYYG) and 193 to 219 (PTPS…QFQQ). The segment covering 220 to 241 (LATRDQSSTSQAIQIAPPSSKS) has biased composition (polar residues). Positions 457–570 (PVIDFVAQLL…LPMEVCKIVE (114 aa)) constitute a PAZ domain. Residues 746–1067 (LLIVILPDNN…AAFRARFYME (322 aa)) form the Piwi domain.

Belongs to the argonaute family. Ago subfamily.

In terms of biological role, probably involved in the RNA silencing pathway. May bind to short RNAs such as microRNAs (miRNAs) or short interfering RNAs (siRNAs), and represses the translation of mRNAs which are complementary to them. This is Protein argonaute 1B (AGO1B) from Oryza sativa subsp. japonica (Rice).